We begin with the raw amino-acid sequence, 140 residues long: Large ribosomal subunit protein uL13 (140 aa).

This sequence belongs to the universal ribosomal protein uL13 family. As to quaternary structure, part of the 50S ribosomal subunit.

In terms of biological role, this protein is one of the early assembly proteins of the 50S ribosomal subunit, although it is not seen to bind rRNA by itself. It is important during the early stages of 50S assembly. The protein is Large ribosomal subunit protein uL13 of Nautilia profundicola (strain ATCC BAA-1463 / DSM 18972 / AmH).